A 123-amino-acid chain; its full sequence is Large ribosomal subunit protein uL29x (123 aa).

This sequence belongs to the universal ribosomal protein uL29 family.

The sequence is that of Large ribosomal subunit protein uL29x (RPL35C) from Arabidopsis thaliana (Mouse-ear cress).